A 1230-amino-acid chain; its full sequence is Ubiquitin carboxyl-terminal hydrolase 15 (1230 aa).

An MATH domain is found at 39–179 (EDSFTWNIPD…EGTLNITAYV (141 aa)). In terms of domain architecture, USP spans 205-536 (VGFRNQGATC…SAYMLVYIRQ (332 aa)). The active-site Nucleophile is C214. The active-site Proton acceptor is H465.

It belongs to the peptidase C19 family. As to quaternary structure, interacts with PEX6; promoting association with the PEX1-PEX6 ATPase complex.

The protein resides in the cytoplasm. It is found in the cytosol. Its subcellular location is the peroxisome. The catalysed reaction is Thiol-dependent hydrolysis of ester, thioester, amide, peptide and isopeptide bonds formed by the C-terminal Gly of ubiquitin (a 76-residue protein attached to proteins as an intracellular targeting signal).. Deubiquitinase involved in peroxisome import by mediating deubiquitination of the peroxisomal import receptor PEX5. Catalyzes deubiquitination of both monoubiquitiated and polyubiquitinated forms of PEX5 following its retrotranslocation into the cytosol, resetting PEX5 for a subsequent import cycle. This chain is Ubiquitin carboxyl-terminal hydrolase 15, found in Saccharomyces cerevisiae (strain ATCC 204508 / S288c) (Baker's yeast).